Here is a 226-residue protein sequence, read N- to C-terminus: Cold-regulated 413 inner membrane protein 2, chloroplastic (226 aa).

Residues 1 to 76 (MASLCLSSSR…RKRGSSVVCY (76 aa)) constitute a chloroplast transit peptide. Over 77–79 (ATP) the chain is Stromal. Residues 80-100 (MLSVHNLQWISTISCVALMFA) traverse the membrane as a helical segment. At 101–103 (RGT) the chain is on the chloroplast intermembrane side. The chain crosses the membrane as a helical span at residues 104–124 (GIHKSFVVPLFALQAPMGIVS). Residues 125 to 129 (WMKGE) lie on the Stromal side of the membrane. A helical transmembrane segment spans residues 130–150 (YGIWAAFLALLTRLFFSFPVE). The Chloroplast intermembrane portion of the chain corresponds to 151-152 (LE). Residues 153-173 (LPFIALLLVIVAPYQVMSIRG) form a helical membrane-spanning segment. Residues 174 to 176 (KQE) are Stromal-facing. A helical membrane pass occupies residues 177–197 (GAILSLAISCFLAFQHFSRAG). Topologically, residues 198–205 (TLQKAFDQ) are chloroplast intermembrane. The chain crosses the membrane as a helical span at residues 206 to 226 (NSVLATVAIIGVTVVSFLFLI).

The protein belongs to the Cold-regulated 413 protein family.

Its subcellular location is the plastid. It localises to the chloroplast inner membrane. The sequence is that of Cold-regulated 413 inner membrane protein 2, chloroplastic (COR413IM2) from Arabidopsis thaliana (Mouse-ear cress).